We begin with the raw amino-acid sequence, 282 residues long: Phosphatidylserine decarboxylase proenzyme (282 aa).

Catalysis depends on charge relay system; for autoendoproteolytic cleavage activity residues Asp88, His145, and Ser248. The active-site Schiff-base intermediate with substrate; via pyruvic acid; for decarboxylase activity is the Ser248. Pyruvic acid (Ser); by autocatalysis is present on Ser248.

This sequence belongs to the phosphatidylserine decarboxylase family. PSD-B subfamily. Prokaryotic type I sub-subfamily. Heterodimer of a large membrane-associated beta subunit and a small pyruvoyl-containing alpha subunit. It depends on pyruvate as a cofactor. Is synthesized initially as an inactive proenzyme. Formation of the active enzyme involves a self-maturation process in which the active site pyruvoyl group is generated from an internal serine residue via an autocatalytic post-translational modification. Two non-identical subunits are generated from the proenzyme in this reaction, and the pyruvate is formed at the N-terminus of the alpha chain, which is derived from the carboxyl end of the proenzyme. The autoendoproteolytic cleavage occurs by a canonical serine protease mechanism, in which the side chain hydroxyl group of the serine supplies its oxygen atom to form the C-terminus of the beta chain, while the remainder of the serine residue undergoes an oxidative deamination to produce ammonia and the pyruvoyl prosthetic group on the alpha chain. During this reaction, the Ser that is part of the protease active site of the proenzyme becomes the pyruvoyl prosthetic group, which constitutes an essential element of the active site of the mature decarboxylase.

It localises to the cell membrane. The catalysed reaction is a 1,2-diacyl-sn-glycero-3-phospho-L-serine + H(+) = a 1,2-diacyl-sn-glycero-3-phosphoethanolamine + CO2. It functions in the pathway phospholipid metabolism; phosphatidylethanolamine biosynthesis; phosphatidylethanolamine from CDP-diacylglycerol: step 2/2. Catalyzes the formation of phosphatidylethanolamine (PtdEtn) from phosphatidylserine (PtdSer). The protein is Phosphatidylserine decarboxylase proenzyme of Dechloromonas aromatica (strain RCB).